A 180-amino-acid polypeptide reads, in one-letter code: Large ribosomal subunit protein uL5 (180 aa).

The protein belongs to the universal ribosomal protein uL5 family. As to quaternary structure, part of the 50S ribosomal subunit; part of the 5S rRNA/L5/L18/L25 subcomplex. Contacts the 5S rRNA and the P site tRNA. Forms a bridge to the 30S subunit in the 70S ribosome.

This is one of the proteins that bind and probably mediate the attachment of the 5S RNA into the large ribosomal subunit, where it forms part of the central protuberance. In the 70S ribosome it contacts protein S13 of the 30S subunit (bridge B1b), connecting the 2 subunits; this bridge is implicated in subunit movement. Contacts the P site tRNA; the 5S rRNA and some of its associated proteins might help stabilize positioning of ribosome-bound tRNAs. This chain is Large ribosomal subunit protein uL5, found in Chlamydia pneumoniae (Chlamydophila pneumoniae).